Here is a 377-residue protein sequence, read N- to C-terminus: Actin depolymerising venom protein gelsolin 1 (377 aa).

Positions 1–26 (MFRQMKLGSLATKLLLACFLVTCTSG) are cleaved as a signal peptide. Gelsolin-like repeat units lie at residues 50-133 (FVPV…SEQF), 174-243 (IRVR…SSTS), and 298-368 (EKPL…PTAF).

As to expression, expressed by the venom gland (posterior main gland) (at protein level).

Its subcellular location is the secreted. This is Actin depolymerising venom protein gelsolin 1 from Platymeris rhadamanthus (Red spot assassin bug).